The sequence spans 148 residues: Nucleoside diphosphate kinase 1 (148 aa).

Positions 9, 57, 85, 91, 102, and 112 each coordinate ATP. Catalysis depends on H115, which acts as the Pros-phosphohistidine intermediate.

It belongs to the NDK family. It depends on Mg(2+) as a cofactor.

The enzyme catalyses a 2'-deoxyribonucleoside 5'-diphosphate + ATP = a 2'-deoxyribonucleoside 5'-triphosphate + ADP. It carries out the reaction a ribonucleoside 5'-diphosphate + ATP = a ribonucleoside 5'-triphosphate + ADP. In terms of biological role, major role in the synthesis of nucleoside triphosphates other than ATP. The ATP gamma phosphate is transferred to the NDP beta phosphate via a ping-pong mechanism, using a phosphorylated active-site intermediate. This is Nucleoside diphosphate kinase 1 from Nicotiana tabacum (Common tobacco).